The sequence spans 817 residues: Cargo-transport protein YPP1 (817 aa).

The protein belongs to the YPP1 family. Interacts with STT4 and ribosomes.

It is found in the cytoplasmic granule. Its subcellular location is the cell membrane. Its function is as follows. Involved in endocytosis. The sequence is that of Cargo-transport protein YPP1 (YPP1) from Saccharomyces cerevisiae (strain YJM789) (Baker's yeast).